A 151-amino-acid polypeptide reads, in one-letter code: 3-dehydroquinate dehydratase (151 aa).

The active-site Proton acceptor is Tyr-26. Substrate contacts are provided by Asn-75, His-81, and Asp-88. His-101 serves as the catalytic Proton donor. Substrate contacts are provided by residues 102-103 (LS) and Arg-112.

This sequence belongs to the type-II 3-dehydroquinase family. In terms of assembly, homododecamer.

It carries out the reaction 3-dehydroquinate = 3-dehydroshikimate + H2O. The protein operates within metabolic intermediate biosynthesis; chorismate biosynthesis; chorismate from D-erythrose 4-phosphate and phosphoenolpyruvate: step 3/7. Catalyzes a trans-dehydration via an enolate intermediate. The polypeptide is 3-dehydroquinate dehydratase (Shewanella sediminis (strain HAW-EB3)).